Here is a 113-residue protein sequence, read N- to C-terminus: Large ribosomal subunit protein uL22 (113 aa).

The protein belongs to the universal ribosomal protein uL22 family. In terms of assembly, part of the 50S ribosomal subunit.

Functionally, this protein binds specifically to 23S rRNA; its binding is stimulated by other ribosomal proteins, e.g. L4, L17, and L20. It is important during the early stages of 50S assembly. It makes multiple contacts with different domains of the 23S rRNA in the assembled 50S subunit and ribosome. The globular domain of the protein is located near the polypeptide exit tunnel on the outside of the subunit, while an extended beta-hairpin is found that lines the wall of the exit tunnel in the center of the 70S ribosome. This Bacillus cereus (strain ATCC 10987 / NRS 248) protein is Large ribosomal subunit protein uL22.